The chain runs to 397 residues: 1-deoxy-D-xylulose 5-phosphate reductoisomerase (397 aa).

7 residues coordinate NADPH: Ser10, Gly11, Ser12, Ile13, Ala36, Arg37, and Asn124. Lys125 serves as a coordination point for 1-deoxy-D-xylulose 5-phosphate. Position 126 (Glu126) interacts with NADPH. Position 150 (Asp150) interacts with Mn(2+). 1-deoxy-D-xylulose 5-phosphate-binding residues include Ser151, Glu152, Ser186, and His209. Position 152 (Glu152) interacts with Mn(2+). Gly215 contributes to the NADPH binding site. 1-deoxy-D-xylulose 5-phosphate is bound by residues Ser222, Asn227, Lys228, and Glu231. Glu231 lines the Mn(2+) pocket.

This sequence belongs to the DXR family. Requires Mg(2+) as cofactor. The cofactor is Mn(2+).

It catalyses the reaction 2-C-methyl-D-erythritol 4-phosphate + NADP(+) = 1-deoxy-D-xylulose 5-phosphate + NADPH + H(+). It functions in the pathway isoprenoid biosynthesis; isopentenyl diphosphate biosynthesis via DXP pathway; isopentenyl diphosphate from 1-deoxy-D-xylulose 5-phosphate: step 1/6. Functionally, catalyzes the NADPH-dependent rearrangement and reduction of 1-deoxy-D-xylulose-5-phosphate (DXP) to 2-C-methyl-D-erythritol 4-phosphate (MEP). The protein is 1-deoxy-D-xylulose 5-phosphate reductoisomerase of Aeromonas salmonicida (strain A449).